We begin with the raw amino-acid sequence, 371 residues long: DNA repair and recombination protein rti1 (371 aa).

The segment at 346–371 (IDHNRSMPIRRPSLTSNNSANTFSTK) is disordered. Over residues 358-371 (SLTSNNSANTFSTK) the composition is skewed to polar residues.

The protein belongs to the RAD52 family. As to quaternary structure, interacts with rph51 and rph54.

Functionally, active in the repair of DNA damage and in mating-type switching. Probably involved in the repair of DNA double-strands breaks. Has a role in promoting S phase completion. The protein is DNA repair and recombination protein rti1 (rti1) of Schizosaccharomyces pombe (strain 972 / ATCC 24843) (Fission yeast).